Consider the following 116-residue polypeptide: Ribosome-binding factor A (116 aa).

It belongs to the RbfA family. Monomer. Binds 30S ribosomal subunits, but not 50S ribosomal subunits or 70S ribosomes.

It is found in the cytoplasm. Functionally, one of several proteins that assist in the late maturation steps of the functional core of the 30S ribosomal subunit. Associates with free 30S ribosomal subunits (but not with 30S subunits that are part of 70S ribosomes or polysomes). Required for efficient processing of 16S rRNA. May interact with the 5'-terminal helix region of 16S rRNA. The protein is Ribosome-binding factor A of Staphylococcus aureus (strain JH9).